The primary structure comprises 356 residues: Tyrosine recombinase XerS (356 aa).

One can recognise a Core-binding (CB) domain in the interval 16–121 (LMPWYVLEYY…ALSSLYKYLT (106 aa)). Positions 169–354 (GFLTYIDQEH…VSDEQKNALD (186 aa)) constitute a Tyr recombinase domain. Residues R210, K234, H306, R309, and H332 contribute to the active site. Y341 (O-(3'-phospho-DNA)-tyrosine intermediate) is an active-site residue.

Belongs to the 'phage' integrase family. XerS subfamily.

The protein resides in the cytoplasm. FtsK is required for recombination. Functionally, site-specific tyrosine recombinase, which acts by catalyzing the cutting and rejoining of the recombining DNA molecules. Essential to convert dimers of the bacterial chromosome into monomers to permit their segregation at cell division. This chain is Tyrosine recombinase XerS, found in Streptococcus pneumoniae (strain 70585).